The sequence spans 451 residues: ATP synthase subunit beta (451 aa).

An ATP-binding site is contributed by 143-150 (GGAGVGKT).

It belongs to the ATPase alpha/beta chains family. F-type ATPases have 2 components, CF(1) - the catalytic core - and CF(0) - the membrane proton channel. CF(1) has five subunits: alpha(3), beta(3), gamma(1), delta(1), epsilon(1). CF(0) has three main subunits: a(1), b(2) and c(9-12). The alpha and beta chains form an alternating ring which encloses part of the gamma chain. CF(1) is attached to CF(0) by a central stalk formed by the gamma and epsilon chains, while a peripheral stalk is formed by the delta and b chains.

The protein resides in the cell membrane. It carries out the reaction ATP + H2O + 4 H(+)(in) = ADP + phosphate + 5 H(+)(out). Functionally, produces ATP from ADP in the presence of a proton gradient across the membrane. The catalytic sites are hosted primarily by the beta subunits. The polypeptide is ATP synthase subunit beta (Coprothermobacter proteolyticus (strain ATCC 35245 / DSM 5265 / OCM 4 / BT)).